A 204-amino-acid polypeptide reads, in one-letter code: N-alpha-acetyltransferase 40 (204 aa).

In terms of domain architecture, N-acetyltransferase spans 39-202 (EIYHHLEKGL…YYILYTKSRK (164 aa)). Substrate-binding positions include Tyr-64, 107–109 (TVE), and Tyr-118. Acetyl-CoA contacts are provided by residues 120–122 (IQL) and 128–133 (GRNVGK). Thr-154 is a binding site for substrate. Asn-159 lines the acetyl-CoA pocket. Ser-176 contacts substrate.

It belongs to the acetyltransferase family. NAA40 subfamily.

It is found in the cytoplasm. The protein localises to the nucleus. It catalyses the reaction N-terminal L-seryl-[histone H4] + acetyl-CoA = N-terminal N(alpha)-acetyl-L-seryl-[histone H4] + CoA + H(+). It carries out the reaction N-terminal L-seryl-[histone H2A] + acetyl-CoA = N-terminal N(alpha)-acetyl-L-seryl-[histone H2A] + CoA + H(+). Its function is as follows. N-alpha-acetyltransferase that specifically mediates the acetylation of the N-terminal residues of histones H4 and H2A. This is N-alpha-acetyltransferase 40 from Schizosaccharomyces pombe (strain 972 / ATCC 24843) (Fission yeast).